We begin with the raw amino-acid sequence, 878 residues long: Alanine--tRNA ligase (878 aa).

The Zn(2+) site is built by H567, H571, C669, and H673.

The protein belongs to the class-II aminoacyl-tRNA synthetase family. Zn(2+) serves as cofactor.

It is found in the cytoplasm. It catalyses the reaction tRNA(Ala) + L-alanine + ATP = L-alanyl-tRNA(Ala) + AMP + diphosphate. Functionally, catalyzes the attachment of alanine to tRNA(Ala) in a two-step reaction: alanine is first activated by ATP to form Ala-AMP and then transferred to the acceptor end of tRNA(Ala). Also edits incorrectly charged Ser-tRNA(Ala) and Gly-tRNA(Ala) via its editing domain. The chain is Alanine--tRNA ligase from Rickettsia conorii (strain ATCC VR-613 / Malish 7).